A 342-amino-acid polypeptide reads, in one-letter code: MTSLTLALDAMGGDHGPHVTVPAALRALKSHSSLKIILVGDKTEIDVYLRQAEQPLLSRIEVIHTDEVVSMSDRPVHALRTRKNSSMRLSIELVRDGRAAACVSAGNTGALMAMAKVLLKTLPGVDRPALVSCLPSVTQKPVYLLDLGANISCDSETLFQFAVMGSVLCEAVDKKSRPKVALLNVGTEEIKGNDQVQQAAQILQNTDQINYTGFIEGDEIYLGNVDVIVCDGFVGNITLKTSEGIAKLLVHQLKRGLTQGFFVRFLAKLIAPRIQAVLSQMNPDHYNGASLIGLRGIVVKSHGNADETAYLQAISLAVTEAQRRLPEMIKDRLESILLDINN.

It belongs to the PlsX family. In terms of assembly, homodimer. Probably interacts with PlsY.

Its subcellular location is the cytoplasm. It catalyses the reaction a fatty acyl-[ACP] + phosphate = an acyl phosphate + holo-[ACP]. Its pathway is lipid metabolism; phospholipid metabolism. In terms of biological role, catalyzes the reversible formation of acyl-phosphate (acyl-PO(4)) from acyl-[acyl-carrier-protein] (acyl-ACP). This enzyme utilizes acyl-ACP as fatty acyl donor, but not acyl-CoA. The sequence is that of Phosphate acyltransferase from Shewanella sp. (strain ANA-3).